The chain runs to 271 residues: PA-phosphatase related-family protein DDB_G0284367 (271 aa).

The next 6 membrane-spanning stretches (helical) occupy residues 23–43 (FLCL…IPPF), 68–88 (IVPV…VFIG), 102–122 (AALG…ILKV), 150–170 (FPSG…FYLC), 181–201 (GNIL…LVAV), and 211–231 (FSDI…VYFM).

It belongs to the PA-phosphatase related phosphoesterase family.

It is found in the membrane. The protein is PA-phosphatase related-family protein DDB_G0284367 of Dictyostelium discoideum (Social amoeba).